The primary structure comprises 154 residues: Hexachlorocyclohexane dehydrochlorinase 1 (154 aa).

The active site involves D25. Residue H73 is the Proton acceptor of the active site.

It belongs to the HCH dehydrochlorinase family. Homotrimer.

It localises to the periplasm. It carries out the reaction gamma-hexachlorocyclohexane = (3R,4S,5S,6R)-pentachlorocyclohexene + chloride + H(+). It catalyses the reaction (3R,4S,5S,6R)-pentachlorocyclohexene = (3R,6R)-1,3,4,6-tetrachlorocyclohexa-1,4-diene + chloride + H(+). It functions in the pathway xenobiotic degradation; hexachlorocyclohexane degradation. In terms of biological role, catalyzes the conversion of the important environmental pollutant gamma-hexachlorocyclohexane (gamma-HCH or lindane) to 1,3,4,6-tetrachloro-1,4-cyclohexadiene (1,4-TCDN) via gamma-pentachlorocyclohexene (gamma-PCCH). Proceeds by two successive 1,2-anti conformationally dependent dehydrochlorinations. Also shows activity with alpha- and delta-HCH, giving alpha- and delta-PCCH respectively, but not with the beta isomer. The polypeptide is Hexachlorocyclohexane dehydrochlorinase 1 (Sphingobium indicum (strain DSM 16412 / CCM 7286 / MTCC 6364 / B90A)).